We begin with the raw amino-acid sequence, 476 residues long: Trigger factor (476 aa).

The 86-residue stretch at 169 to 254 folds into the PPIase FKBP-type domain; the sequence is GDKVTLDYVG…VKEVAAAEEL (86 aa). Residues 437–476 form a disordered region; sequence SRDELLAEDEAEGEEKKAAGETKKKAAPKKKAAKKESAAE. The span at 450–460 shows a compositional bias: basic and acidic residues; it reads EEKKAAGETKK.

Belongs to the FKBP-type PPIase family. Tig subfamily.

Its subcellular location is the cytoplasm. It carries out the reaction [protein]-peptidylproline (omega=180) = [protein]-peptidylproline (omega=0). Involved in protein export. Acts as a chaperone by maintaining the newly synthesized protein in an open conformation. Functions as a peptidyl-prolyl cis-trans isomerase. The sequence is that of Trigger factor from Chelativorans sp. (strain BNC1).